The sequence spans 309 residues: Transcriptional regulator HilD (309 aa).

Positions 209 to 306 constitute an HTH araC/xylS-type domain; the sequence is ERVYNIISSS…KTTPSTFIKM (98 aa). 2 DNA-binding regions (H-T-H motif) span residues 226-247 and 273-296; these read TDVADHIFMSTSTLKRKLAEEG and VNAVALKCGYDSTSYFIQCFKKYF.

The polypeptide is Transcriptional regulator HilD (hilD) (Salmonella typhimurium (strain SL1344)).